Here is an 855-residue protein sequence, read N- to C-terminus: DNA mismatch repair protein MutS (855 aa).

617–624 (GPNMGGKS) serves as a coordination point for ATP.

It belongs to the DNA mismatch repair MutS family.

Functionally, this protein is involved in the repair of mismatches in DNA. It is possible that it carries out the mismatch recognition step. This protein has a weak ATPase activity. This is DNA mismatch repair protein MutS from Baumannia cicadellinicola subsp. Homalodisca coagulata.